We begin with the raw amino-acid sequence, 1417 residues long: Cytoadherence-linked asexual protein 3.1 (1417 aa).

The signal sequence occupies residues 1–24; it reads MVSFFKTPIFILIIFLYLNEKVIC. Intrachain disulfides connect Cys333/Cys361, Cys407/Cys413, Cys517/Cys545, and Cys521/Cys542. A helical transmembrane segment spans residues 1204 to 1224; that stretch reads LANGFMYAFCFFAISQMYAYF. Residues 1383 to 1417 are disordered; that stretch reads TYIDTEKMNEADSADSDDEKDSDTPDDELMISRFH. Over residues 1394-1411 the composition is skewed to acidic residues; that stretch reads DSADSDDEKDSDTPDDEL.

Self-associates. Component of the RhopH complex. RhopH complex is at least composed of CLAG3.1/CLAG3.2, RhopH2 and RhopH3 with a 1:1:1 subunit stoichiometry. CLAG3.1/CLAG3.2 mediates subunit association through independent contacts with RhopH2 and RhopH3, which do not directly interact with one another. Interacts with RhopH2. Interacts with RhopH3.

Its subcellular location is the host cell membrane. It localises to the host cytoplasm. It is found in the cytoplasmic vesicle. The protein resides in the secretory vesicle. The protein localises to the rhoptry. Functionally, participates in the formation of new permeability pathways in Plasmodium-infected erythrocytes enabling the uptake of nutrients from the blood plasma. The polypeptide is Cytoadherence-linked asexual protein 3.1 (Plasmodium falciparum).